A 109-amino-acid chain; its full sequence is MEVKAIHRGARISAQKTRLVADQIRGLPVDKALNVLTFSPKKAAGIVKKVVLSAIANAEHNEGADIDELKIKSIYVDKAASLKRFTARAKGRGNRIEKQSCHITVTVGN.

Belongs to the universal ribosomal protein uL22 family. In terms of assembly, part of the 50S ribosomal subunit.

This protein binds specifically to 23S rRNA; its binding is stimulated by other ribosomal proteins, e.g. L4, L17, and L20. It is important during the early stages of 50S assembly. It makes multiple contacts with different domains of the 23S rRNA in the assembled 50S subunit and ribosome. Its function is as follows. The globular domain of the protein is located near the polypeptide exit tunnel on the outside of the subunit, while an extended beta-hairpin is found that lines the wall of the exit tunnel in the center of the 70S ribosome. This Paraburkholderia phymatum (strain DSM 17167 / CIP 108236 / LMG 21445 / STM815) (Burkholderia phymatum) protein is Large ribosomal subunit protein uL22.